We begin with the raw amino-acid sequence, 471 residues long: Alpha-galactosidase 1 (471 aa).

The first 18 residues, 1 to 18, serve as a signal peptide directing secretion; sequence MFAFYFLTACISLKGVFG. Cys42 and Cys74 are joined by a disulfide. Positions 72 and 73 each coordinate substrate. N-linked (GlcNAc...) asparagine glycosylation is present at Asn105. An intrachain disulfide couples Cys121 to Cys151. Lys147 provides a ligand contact to substrate. Asp149 serves as the catalytic Nucleophile. N-linked (GlcNAc...) asparagine glycosylation occurs at Asn175. Arg205 lines the substrate pocket. The Proton donor role is filled by Asp209. Intrachain disulfides connect Cys221–Cys237 and Cys223–Cys230. Position 251 (Gln251) interacts with substrate. Asn270, Asn370, Asn403, Asn413, Asn422, Asn435, and Asn454 each carry an N-linked (GlcNAc...) asparagine glycan.

It belongs to the glycosyl hydrolase 27 family. Homotetramer.

It localises to the secreted. It carries out the reaction Hydrolysis of terminal, non-reducing alpha-D-galactose residues in alpha-D-galactosides, including galactose oligosaccharides, galactomannans and galactolipids.. This chain is Alpha-galactosidase 1 (MEL1), found in Saccharomyces cerevisiae (Baker's yeast).